Consider the following 515-residue polypeptide: Protein disulfide-isomerase (515 aa).

The N-terminal stretch at 1–20 (MRTFAPWILSLLGASAVASA) is a signal peptide. 2 consecutive Thioredoxin domains span residues 21 to 136 (ADAT…QSLP) and 343 to 470 (VLDD…ENGK). Residues Cys58, Cys61, Cys393, and Cys396 each act as nucleophile in the active site. Intrachain disulfides connect Cys58/Cys61 and Cys393/Cys396. 2 stretches are compositionally biased toward basic and acidic residues: residues 472-496 (KVDA…RAAS) and 506-515 (SDDKSEHDEL). The interval 472–515 (KVDALEVDPKKEQESGDATETRAASDETETPAATSDDKSEHDEL) is disordered. The Prevents secretion from ER motif lies at 512–515 (HDEL).

The protein belongs to the protein disulfide isomerase family.

It localises to the endoplasmic reticulum lumen. It catalyses the reaction Catalyzes the rearrangement of -S-S- bonds in proteins.. Participates in the folding of proteins containing disulfide bonds, may be involved in glycosylation, prolyl hydroxylation and triglyceride transfer. The sequence is that of Protein disulfide-isomerase (pdiA) from Aspergillus oryzae (strain ATCC 42149 / RIB 40) (Yellow koji mold).